Consider the following 554-residue polypeptide: MMLSRAKPAVGGESPHTDKRKKKGRKIPKLEDLLSQRDFTGAITLLEFKRHVGEQEEDTNLWIGYCAFHLGDYKRALEEYENAAKEENCNPEVWVNLACTYFFLGMYKQAEAAGFKAPKSRLQNRLLFHLAHKFNDEKKLMNFHQNLQDIKEDQLSLASIHYMRSHYQEAIDIYKRILLDNREYLALNVYVALCYYKLDYYDVSQEVLAVYLQQIPDSTIALNLKACNHFRLYNGKAAEAELKSLMDNASSPFEFAKELIRHNLVVFRGGEGALQVLPPLVDVIPEARLNLVIYYLRQDDVQEAYNLIKDLEPTTPQEYILKGVVNAALGQEMGSRDHMKIAQQFFQLVGGSASECDTIPGRQCMASCFFLLKQFDDVLIYLNSFKSYFYNDDIFNFNYAQAKAATGNTSEGEEVFLLIQSEKLKNDYIYLSWLARCYIMNKKPRLAWELYLKMETSGESFSLLQLIANDCYKMGQFYYSAKAFDVLERLDPNPEYWEGKRGACVGIFQMILAGREPKETLREVLHLLRSTGNTQVEYIIRIMKKWAKENRVPI.

A disordered region spans residues 1-27 (MMLSRAKPAVGGESPHTDKRKKKGRKI). Residues 18 to 27 (DKRKKKGRKI) are compositionally biased toward basic residues. TPR repeat units lie at residues 57-90 (EDTNLWIGYCAFHLGDYKRALEEYENAAKEENCN), 92-125 (EVWVNLACTYFFLGMYKQAEAAGFKAPKSRLQNR), 151-184 (KEDQLSLASIHYMRSHYQEAIDIYKRILLDNREY), and 468-501 (ANDCYKMGQFYYSAKAFDVLERLDPNPEYWEGKR).

The protein belongs to the IFT56 family. As to quaternary structure, component of the IFT complex B. Interacts with IFT46; the interaction is direct.

The protein resides in the cell projection. It localises to the cilium. Functionally, component of the intraflagellar transport (IFT) complex B required for transport of proteins in the motile cilium. Required for transport of specific ciliary cargo proteins related to motility, while it is neither required for IFT complex B assembly or motion nor for cilium assembly. Required for efficient coupling between the accumulation of GLI2 and GLI3 at the ciliary tips and their dissociation from the negative regulator SUFU. Plays a key role in maintaining the integrity of the IFT complex B and the proper ciliary localization of the IFT complex B components. Not required for IFT complex A ciliary localization or function. Essential for maintaining proper microtubule organization within the ciliary axoneme. The polypeptide is Intraflagellar transport protein 56 (Rattus norvegicus (Rat)).